Consider the following 494-residue polypeptide: AAA-ATPase At2g18190 (494 aa).

Residues 13–29 traverse the membrane as a helical segment; it reads SSLFTAYASLTGFLMLF. 251-258 contacts ATP; it reads GPPGTGKS. Residues 459 to 470 are compositionally biased toward basic and acidic residues; the sequence is TCRKLDGDDKHN. A disordered region spans residues 459-494; the sequence is TCRKLDGDDKHNVSSTNDLKKTKKKKKGGKGKAKGN. The span at 479–494 shows a compositional bias: basic residues; it reads KTKKKKKGGKGKAKGN.

It belongs to the AAA ATPase family. BCS1 subfamily. Mg(2+) is required as a cofactor.

The protein localises to the membrane. It catalyses the reaction ATP + H2O = ADP + phosphate + H(+). The chain is AAA-ATPase At2g18190 from Arabidopsis thaliana (Mouse-ear cress).